The sequence spans 74 residues: Protein krueppel (74 aa).

4 C2H2-type zinc fingers span residues 1-4 (ERTH), 10-32 (FECP…MRLH), 38-60 (YHCS…LRVH), and 66-74 (YACELCDAR).

The protein belongs to the krueppel C2H2-type zinc-finger protein family.

It localises to the nucleus. Krueppel is a gap class segmentation protein. The sequence is that of Protein krueppel (Kr) from Psychoda cinerea (Psychod fly).